The chain runs to 490 residues: Stomatal closure-related actin-binding protein 3 (490 aa).

This sequence belongs to the SCAB family. Expressed in roots, stems, leaves, siliques and flowers.

Its subcellular location is the cytoplasm. It localises to the cytoskeleton. In terms of biological role, probable plant-specific actin binding protein that bundles and stabilizes microfilaments (MFs). This is Stomatal closure-related actin-binding protein 3 from Arabidopsis thaliana (Mouse-ear cress).